A 372-amino-acid chain; its full sequence is Mitogen-activated protein kinase spk1 (372 aa).

The span at methionine 1–serine 25 shows a compositional bias: polar residues. Residues methionine 1–histidine 29 are disordered. Positions tyrosine 39 to valine 327 constitute a Protein kinase domain. Residues isoleucine 45–valine 53 and lysine 68 contribute to the ATP site. The active-site Proton acceptor is the aspartate 163. Threonine 199 is subject to Phosphothreonine. The TXY motif lies at threonine 199–tyrosine 201. Tyrosine 201 is modified (phosphotyrosine).

This sequence belongs to the protein kinase superfamily. CMGC Ser/Thr protein kinase family. MAP kinase subfamily. The cofactor is Mg(2+). Post-translationally, dually phosphorylated on Thr-199 and Tyr-201, which activates the enzyme.

The protein localises to the nucleus. It carries out the reaction L-seryl-[protein] + ATP = O-phospho-L-seryl-[protein] + ADP + H(+). It catalyses the reaction L-threonyl-[protein] + ATP = O-phospho-L-threonyl-[protein] + ADP + H(+). With respect to regulation, activated by tyrosine and threonine phosphorylation. Involved in mating signal transduction pathway. This is Mitogen-activated protein kinase spk1 (spk1) from Schizosaccharomyces pombe (strain 972 / ATCC 24843) (Fission yeast).